The primary structure comprises 86 residues: Heat shock factor-binding protein (86 aa).

Residues 34 to 63 (MSDSIITKIDDMGGRINELEQSINDLRAEM) are a coiled coil. Positions 42–52 (IDDMGGRINEL) are required for interactions with heat shock factors (HSFs). The disordered stretch occupies residues 59-86 (LRAEMGVEGTPPPASKSGDEPKTPASSS).

This sequence belongs to the HSBP1 family. In terms of assembly, homohexamer. Interacts with HSFA1A, HSFA1B and HSFA2. In terms of tissue distribution, mostly expressed in siliques and flowers, and, to a lower extent, in roots, stems and leaves.

It is found in the nucleus. It localises to the cytoplasm. Its subcellular location is the cytosol. Its function is as follows. Negative regulator of the heat shock (HS) response. Affects negatively HSFA1B DNA-binding capacity in vitro. Involved in acquired thermotolerance but not basal thermotolerance. Crucial for seed development, after fertilization and during embryogenesis. This Arabidopsis thaliana (Mouse-ear cress) protein is Heat shock factor-binding protein.